We begin with the raw amino-acid sequence, 430 residues long: Trigger factor (430 aa).

In terms of domain architecture, PPIase FKBP-type spans 163 to 248 (GDIAVIDFEG…LNSLKRKNMP (86 aa)).

This sequence belongs to the FKBP-type PPIase family. Tig subfamily.

Its subcellular location is the cytoplasm. It catalyses the reaction [protein]-peptidylproline (omega=180) = [protein]-peptidylproline (omega=0). Involved in protein export. Acts as a chaperone by maintaining the newly synthesized protein in an open conformation. Functions as a peptidyl-prolyl cis-trans isomerase. This is Trigger factor from Brevibacillus brevis (strain 47 / JCM 6285 / NBRC 100599).